Here is a 158-residue protein sequence, read N- to C-terminus: Ribosome maturation factor RimP (158 aa).

This sequence belongs to the RimP family.

It localises to the cytoplasm. Required for maturation of 30S ribosomal subunits. This Pediococcus pentosaceus (strain ATCC 25745 / CCUG 21536 / LMG 10740 / 183-1w) protein is Ribosome maturation factor RimP.